The primary structure comprises 274 residues: Triosephosphate isomerase (274 aa).

A substrate-binding site is contributed by 13 to 15; it reads NWK. His98 (electrophile) is an active-site residue. The Proton acceptor role is filled by Glu170. Positions 176 and 216 each coordinate substrate.

The protein belongs to the triosephosphate isomerase family. In terms of assembly, homodimer.

Its subcellular location is the cytoplasm. It carries out the reaction D-glyceraldehyde 3-phosphate = dihydroxyacetone phosphate. The protein operates within carbohydrate biosynthesis; gluconeogenesis. It participates in carbohydrate degradation; glycolysis; D-glyceraldehyde 3-phosphate from glycerone phosphate: step 1/1. Functionally, involved in the gluconeogenesis. Catalyzes stereospecifically the conversion of dihydroxyacetone phosphate (DHAP) to D-glyceraldehyde-3-phosphate (G3P). This chain is Triosephosphate isomerase, found in Onion yellows phytoplasma (strain OY-M).